The sequence spans 135 residues: Ribosome-binding factor A (135 aa).

Belongs to the RbfA family. As to quaternary structure, monomer. Binds 30S ribosomal subunits, but not 50S ribosomal subunits or 70S ribosomes.

It is found in the cytoplasm. Functionally, one of several proteins that assist in the late maturation steps of the functional core of the 30S ribosomal subunit. Associates with free 30S ribosomal subunits (but not with 30S subunits that are part of 70S ribosomes or polysomes). Required for efficient processing of 16S rRNA. May interact with the 5'-terminal helix region of 16S rRNA. In Rhizobium meliloti (strain 1021) (Ensifer meliloti), this protein is Ribosome-binding factor A.